Here is a 72-residue protein sequence, read N- to C-terminus: Large ribosomal subunit protein bL28 (72 aa).

It belongs to the bacterial ribosomal protein bL28 family.

This chain is Large ribosomal subunit protein bL28, found in Chlorobaculum parvum (strain DSM 263 / NCIMB 8327) (Chlorobium vibrioforme subsp. thiosulfatophilum).